A 212-amino-acid chain; its full sequence is Large ribosomal subunit protein uL4 (212 aa).

Residues 45 to 71 are disordered; it reads RQGNASTKTRAEVRGGGRKPWRQKGTG. Residues 60-71 show a composition bias toward basic residues; that stretch reads GGRKPWRQKGTG.

It belongs to the universal ribosomal protein uL4 family. Part of the 50S ribosomal subunit.

One of the primary rRNA binding proteins, this protein initially binds near the 5'-end of the 23S rRNA. It is important during the early stages of 50S assembly. It makes multiple contacts with different domains of the 23S rRNA in the assembled 50S subunit and ribosome. Functionally, forms part of the polypeptide exit tunnel. The protein is Large ribosomal subunit protein uL4 of Nostoc punctiforme (strain ATCC 29133 / PCC 73102).